The following is a 30-amino-acid chain: Natriuretic peptides A (30 aa).

The propeptide occupies 1 to 3 (APR). An intrachain disulfide couples cysteine 11 to cysteine 27.

This sequence belongs to the natriuretic peptide family. Post-translationally, cleaved upon secretion to produce the functional hormone.

The protein localises to the secreted. Hormone playing a key role in cardiovascular homeostasis through regulation of natriuresis, diuresis, and vasodilation. Has a cGMP-stimulating activity. This chain is Natriuretic peptides A, found in Pelophylax ridibundus (Marsh frog).